A 369-amino-acid polypeptide reads, in one-letter code: Mitogen-activated protein kinase 4 (369 aa).

The Protein kinase domain occupies tyrosine 32–methionine 319. ATP contacts are provided by residues isoleucine 38–valine 46 and lysine 61. Aspartate 158 (proton acceptor) is an active-site residue. Phosphothreonine is present on threonine 191. Residues threonine 191–tyrosine 193 carry the TXY motif. Position 193 is a phosphotyrosine (tyrosine 193).

Belongs to the protein kinase superfamily. CMGC Ser/Thr protein kinase family. MAP kinase subfamily. Post-translationally, dually phosphorylated on Thr-191 and Tyr-193, which activates the enzyme. As to expression, expressed in leaves and panicles.

It carries out the reaction L-seryl-[protein] + ATP = O-phospho-L-seryl-[protein] + ADP + H(+). It catalyses the reaction L-threonyl-[protein] + ATP = O-phospho-L-threonyl-[protein] + ADP + H(+). Activated by threonine and tyrosine phosphorylation. This chain is Mitogen-activated protein kinase 4 (MPK4), found in Oryza sativa subsp. japonica (Rice).